Consider the following 208-residue polypeptide: Ribosomal RNA small subunit methyltransferase G (208 aa).

Residues glycine 78, phenylalanine 83, 101 to 103 (ERS), 129 to 130 (IE), and arginine 142 contribute to the S-adenosyl-L-methionine site.

The protein belongs to the methyltransferase superfamily. RNA methyltransferase RsmG family.

The protein localises to the cytoplasm. Its function is as follows. Specifically methylates the N7 position of a guanine in 16S rRNA. The chain is Ribosomal RNA small subunit methyltransferase G from Borreliella burgdorferi (strain ATCC 35210 / DSM 4680 / CIP 102532 / B31) (Borrelia burgdorferi).